A 348-amino-acid polypeptide reads, in one-letter code: UDP-3-O-acylglucosamine N-acyltransferase (348 aa).

The Proton acceptor role is filled by histidine 241.

This sequence belongs to the transferase hexapeptide repeat family. LpxD subfamily. Homotrimer.

It catalyses the reaction a UDP-3-O-[(3R)-3-hydroxyacyl]-alpha-D-glucosamine + a (3R)-hydroxyacyl-[ACP] = a UDP-2-N,3-O-bis[(3R)-3-hydroxyacyl]-alpha-D-glucosamine + holo-[ACP] + H(+). The protein operates within bacterial outer membrane biogenesis; LPS lipid A biosynthesis. Its function is as follows. Catalyzes the N-acylation of UDP-3-O-acylglucosamine using 3-hydroxyacyl-ACP as the acyl donor. Is involved in the biosynthesis of lipid A, a phosphorylated glycolipid that anchors the lipopolysaccharide to the outer membrane of the cell. In Neisseria meningitidis serogroup C / serotype 2a (strain ATCC 700532 / DSM 15464 / FAM18), this protein is UDP-3-O-acylglucosamine N-acyltransferase.